Reading from the N-terminus, the 100-residue chain is Aspartyl/glutamyl-tRNA(Asn/Gln) amidotransferase subunit C (100 aa).

The protein belongs to the GatC family. Heterotrimer of A, B and C subunits.

It carries out the reaction L-glutamyl-tRNA(Gln) + L-glutamine + ATP + H2O = L-glutaminyl-tRNA(Gln) + L-glutamate + ADP + phosphate + H(+). The enzyme catalyses L-aspartyl-tRNA(Asn) + L-glutamine + ATP + H2O = L-asparaginyl-tRNA(Asn) + L-glutamate + ADP + phosphate + 2 H(+). Functionally, allows the formation of correctly charged Asn-tRNA(Asn) or Gln-tRNA(Gln) through the transamidation of misacylated Asp-tRNA(Asn) or Glu-tRNA(Gln) in organisms which lack either or both of asparaginyl-tRNA or glutaminyl-tRNA synthetases. The reaction takes place in the presence of glutamine and ATP through an activated phospho-Asp-tRNA(Asn) or phospho-Glu-tRNA(Gln). This chain is Aspartyl/glutamyl-tRNA(Asn/Gln) amidotransferase subunit C, found in Corynebacterium aurimucosum (strain ATCC 700975 / DSM 44827 / CIP 107346 / CN-1) (Corynebacterium nigricans).